We begin with the raw amino-acid sequence, 134 residues long: Cytochrome b5 (134 aa).

Position 2 is an N-acetylalanine (Ala-2). Residues Lys-7, Lys-10, and Lys-19 each carry the N6-acetyllysine modification. Positions 9 to 85 constitute a Cytochrome b5 heme-binding domain; it reads VKYYTLEEIQ…SKTYIIGELH (77 aa). The heme site is built by His-44 and His-68. A helical membrane pass occupies residues 109–131; sequence WWTNWVIPAISALAVALMYRLYM.

It belongs to the cytochrome b5 family.

The protein localises to the endoplasmic reticulum membrane. The protein resides in the microsome membrane. Functionally, cytochrome b5 is a membrane-bound hemoprotein functioning as an electron carrier for several membrane-bound oxygenases. It is also involved in several steps of the sterol biosynthesis pathway, particularly in the C-5 double bond introduction during the C-5 desaturation. The protein is Cytochrome b5 (Cyb5a) of Mus musculus (Mouse).